Here is a 116-residue protein sequence, read N- to C-terminus: DNA polymerase epsilon subunit 4 (116 aa).

A compositionally biased stretch (low complexity) spans 1–10; sequence MAAAAPGSGA. The disordered stretch occupies residues 1–36; it reads MAAAAPGSGAAREEEGTGGDAATPQPPAPTSAPGAR.

As to quaternary structure, component of the DNA polymerase epsilon complex consisting of four subunits: the catalytic subunit POLE and the accessory subunits POLE2, POLE3 and POLE4. Interaction with POLE3 is a prerequisite for further binding with POLE and POLE2.

The protein localises to the nucleus. In terms of biological role, accessory component of the DNA polymerase epsilon complex. Participates in DNA repair and in chromosomal DNA replication. The polypeptide is DNA polymerase epsilon subunit 4 (POLE4) (Bos taurus (Bovine)).